Reading from the N-terminus, the 326-residue chain is DnaJ homolog subfamily B member 6 (326 aa).

Residues 2-69 form the J domain; it reads VDYYEVLGVQ…KKRDIYDKYG (68 aa). The tract at residues 2–146 is interaction with HSP70; it reads VDYYEVLGVQ…TGSFFSAFSG (145 aa). The segment at 119 to 242 is interaction with KRT18; sequence FEDFFGNRRG…ADDDALAEER (124 aa). R135 bears the Omega-N-methylarginine mark. A disordered region spans residues 249–326; the sequence is ALPAQPAGLR…KKKKSTKGNH (78 aa). S277 is subject to Phosphoserine.

As to quaternary structure, homooligomer. Interacts with BAG3, HSPB8 and STUB1. Interacts with ALKBH1. Interacts with HSP70, KRT18 and PTTG. In terms of assembly, interacts with histone deacetylases HDAC4, HDAC6, and SIRT2, HDAC activity is required for antiaggregation. In terms of tissue distribution, widely expressed. Highest levels in testis and brain, and lower levels in heart, spleen, intestine, ovary, placenta, lung, kidney, pancreas, thymus, prostate, skeletal muscle, liver and leukocytes. In testis, expressed in germ cells in the earlier stages of differentiation pathway as well as in spermatids. In brain, expressed at a higher level in hippocampus and thalamus and a lower level in amygdala, substantia nigra, corpus callosum and caudate nucleus.

The protein resides in the cytoplasm. It is found in the perinuclear region. It localises to the nucleus. The protein localises to the myofibril. Its subcellular location is the sarcomere. The protein resides in the z line. Has a stimulatory effect on the ATPase activity of HSP70 in a dose-dependent and time-dependent manner and hence acts as a co-chaperone of HSP70. Plays an indispensable role in the organization of KRT8/KRT18 filaments. Acts as an endogenous molecular chaperone for neuronal proteins including huntingtin. Suppresses aggregation and toxicity of polyglutamine-containing, aggregation-prone proteins. Also reduces cellular toxicity and caspase-3 activity. Functionally, isoform B but not isoform A inhibits huntingtin aggregation. The chain is DnaJ homolog subfamily B member 6 (DNAJB6) from Homo sapiens (Human).